The following is a 431-amino-acid chain: Enolase (431 aa).

A (2R)-2-phosphoglycerate-binding site is contributed by Q166. The active-site Proton donor is the E208. D245, E288, and D315 together coordinate Mg(2+). Residues K340, R369, S370, and K391 each coordinate (2R)-2-phosphoglycerate. K340 serves as the catalytic Proton acceptor.

The protein belongs to the enolase family. Mg(2+) is required as a cofactor.

The protein localises to the cytoplasm. It localises to the secreted. Its subcellular location is the cell surface. The catalysed reaction is (2R)-2-phosphoglycerate = phosphoenolpyruvate + H2O. The protein operates within carbohydrate degradation; glycolysis; pyruvate from D-glyceraldehyde 3-phosphate: step 4/5. In terms of biological role, catalyzes the reversible conversion of 2-phosphoglycerate (2-PG) into phosphoenolpyruvate (PEP). It is essential for the degradation of carbohydrates via glycolysis. This Clostridium botulinum (strain Loch Maree / Type A3) protein is Enolase.